The chain runs to 149 residues: uncharacterized protein (149 aa).

2 helical membrane passes run 91–111 (IFIL…LFHY) and 122–142 (ISIL…ICLL).

The protein localises to the membrane. This is an uncharacterized protein from Dictyostelium discoideum (Social amoeba).